A 99-amino-acid chain; its full sequence is High mobility group nucleosome-binding domain-containing protein 3 (99 aa).

Basic and acidic residues-rich tracts occupy residues Met1 to Arg25 and Pro39 to Gly53. Residues Met1–Glu99 are disordered. Ser6 carries the phosphoserine modification. Thr10 carries the phosphothreonine modification. 2 positions are modified to phosphoserine: Ser78 and Ser93. Residues Thr83–Glu99 are compositionally biased toward basic and acidic residues.

The protein belongs to the HMGN family. Interacts with the ligand binding domain of the thyroid receptor (TR) (in vitro). Requires the presence of thyroid hormone for its interaction. Interacts with transcriptional regulator SEHBP. Interacts with nucleosomes. As to expression, expressed in the brain, eye, prostate, thyroid, kidney, testis, glial cells and insulin-producing cells of the Langerhans pancreatic islets. In the brain, expressed in the lateral olfactory tract, anterior commissure, corpus callosum, internal capsule, fornix, stria medullans, optic tract, axon bundles, Purkinje cell layer and granular layer of the cerebellum. In retina, expressed in the nuclei of cells in the inner nuclear layer including amacrine, bipolar and horizontal neurons and in the nuclei of ganglion neurons. Detected at low levels in the liver.

The protein localises to the nucleus. Binds to nucleosomes, regulating chromatin structure and consequently, chromatin-dependent processes such as transcription, DNA replication and DNA repair. Affects both insulin and glucagon levels and modulates the expression of pancreatic genes involved in insulin secretion. Regulates the expression of the glucose transporter SLC2A2 by binding specifically to its promoter region and recruiting PDX1 and additional transcription factors. Regulates the expression of SLC6A9, a glycine transporter which regulates the glycine concentration in synaptic junctions in the central nervous system, by binding to its transcription start site. May play a role in ocular development and astrocyte function. The protein is High mobility group nucleosome-binding domain-containing protein 3 (Hmgn3) of Mus musculus (Mouse).